Consider the following 372-residue polypeptide: uncharacterized protein (372 aa).

Residues 224–244 (GSTVGVVIGVVIVIFIGFIII) form a helical membrane-spanning segment. Ser-329 carries the phosphoserine modification.

The protein localises to the vacuole membrane. This is an uncharacterized protein from Saccharomyces cerevisiae (strain ATCC 204508 / S288c) (Baker's yeast).